The chain runs to 279 residues: Plasmodesmata-located protein 8 (279 aa).

The signal sequence occupies residues 1 to 20; it reads MRRLFLFSLLFLFFYSSSSS. Residues 21-253 are Extracellular-facing; sequence RSSSESHIFI…PTNGDHVGKS (233 aa). 2 consecutive Gnk2-homologous domains span residues 27-135 and 137-237; these read HIFI…TNDF and GKPD…GSGY. 6 cysteine pairs are disulfide-bonded: Cys34–Cys113, Cys89–Cys98, Cys101–Cys126, Cys148–Cys215, Cys191–Cys200, and Cys203–Cys228. A helical transmembrane segment spans residues 254–274; that stretch reads IAIIVGVIAGFAILVVLLSLC. The necessary and sufficient for plasmodesmal targeting stretch occupies residues 254–274; the sequence is IAIIVGVIAGFAILVVLLSLC. The Cytoplasmic segment spans residues 275 to 279; that stretch reads RNSMH.

The protein belongs to the cysteine-rich repeat secretory protein family. Plasmodesmata-located proteins (PDLD) subfamily. In terms of assembly, interacts with ACBP6; interaction occurs at the plasma membrane. (Microbial infection) Interacts with Grapevine fanleaf virus (GFLV) 2B-MP. In terms of tissue distribution, highly expressed in pollen, lateral root and elongation zone. Higher expression in the reproductive tissues (flowers and buds) than in vegetative organs (leaves and stems). High expression in shoot and root phloem companion cells (at protein level).

The protein localises to the cell membrane. It localises to the cell junction. Its subcellular location is the plasmodesma. Modulates cell-to-cell trafficking. The sequence is that of Plasmodesmata-located protein 8 from Arabidopsis thaliana (Mouse-ear cress).